Reading from the N-terminus, the 396-residue chain is L-lactate dehydrogenase (396 aa).

The FMN hydroxy acid dehydrogenase domain occupies 1 to 380; sequence MIISAASDYR…SQDSLVQELD (380 aa). Y24 provides a ligand contact to substrate. The FMN site is built by S106 and Q127. Residue Y129 participates in substrate binding. T155 is a binding site for FMN. Residue R164 coordinates substrate. K251 is a binding site for FMN. The active-site Proton acceptor is H275. R278 is a substrate binding site. 306 to 330 serves as a coordination point for FMN; sequence DSGIRNGLDVVRMIALGADTVLLGR.

This sequence belongs to the FMN-dependent alpha-hydroxy acid dehydrogenase family. Requires FMN as cofactor.

The protein localises to the cell inner membrane. It carries out the reaction (S)-lactate + A = pyruvate + AH2. Catalyzes the conversion of L-lactate to pyruvate. Is coupled to the respiratory chain. The protein is L-lactate dehydrogenase of Escherichia fergusonii (strain ATCC 35469 / DSM 13698 / CCUG 18766 / IAM 14443 / JCM 21226 / LMG 7866 / NBRC 102419 / NCTC 12128 / CDC 0568-73).